The sequence spans 148 residues: Large ribosomal subunit protein uL15 (148 aa).

Over residues 1–11 the composition is skewed to basic and acidic residues; the sequence is MSEPIKLHDLR. Residues 1-52 are disordered; that stretch reads MSEPIKLHDLRPAAGSNKAKTRVGRGEASKGKTAGRGTKGTKARKQVSAAFE.

It belongs to the universal ribosomal protein uL15 family. As to quaternary structure, part of the 50S ribosomal subunit.

In terms of biological role, binds to the 23S rRNA. This Corynebacterium glutamicum (strain R) protein is Large ribosomal subunit protein uL15.